Reading from the N-terminus, the 195-residue chain is MPIVIEQSARGERAFDIYSRLLKERVIFLVGQVEDYMANLVIAQLLFLESENPDKDIHLYINSPGGLVTAGLAIYDTMQFIKPDVSTLCVGQAASMGALLLAGGAAGKRYCLPHSRIMIHQPLGGFQGQASDIDIHAREILAVRDRLNKILAHHTGQPIEKIQIDTDRDNFMGGDDAVSYGLIDKVLTHRTVTAA.

Ser-95 acts as the Nucleophile in catalysis. His-120 is an active-site residue.

Belongs to the peptidase S14 family. Fourteen ClpP subunits assemble into 2 heptameric rings which stack back to back to give a disk-like structure with a central cavity, resembling the structure of eukaryotic proteasomes.

It is found in the cytoplasm. The catalysed reaction is Hydrolysis of proteins to small peptides in the presence of ATP and magnesium. alpha-casein is the usual test substrate. In the absence of ATP, only oligopeptides shorter than five residues are hydrolyzed (such as succinyl-Leu-Tyr-|-NHMec, and Leu-Tyr-Leu-|-Tyr-Trp, in which cleavage of the -Tyr-|-Leu- and -Tyr-|-Trp bonds also occurs).. Functionally, cleaves peptides in various proteins in a process that requires ATP hydrolysis. Has a chymotrypsin-like activity. Plays a major role in the degradation of misfolded proteins. In Methylococcus capsulatus (strain ATCC 33009 / NCIMB 11132 / Bath), this protein is ATP-dependent Clp protease proteolytic subunit 2.